Consider the following 645-residue polypeptide: MSVINCEEVKRDEFHTEKYYESYNIFGAHIVTEDEMRGVRFTVWAPHAKAMSVVGDFNEWDYEQHKMLQVTEEGIWSLFIPHIEEREIYKYAIETMAGDVILKADPYAVYAEVRPNTASVVFDIKGYEWNDKNWSRKKKKKSVYKEAMTVYELHFGSWKKKEDGTLYSYREMAEELIPYVVEHQFTHIEIMPLVEHPYDRSWGYQGTGYYAATSRFGTPHDLMHFVDECHKYGIGVILDWVPGHFCKDAHGLYLFDGTPTYEYKDKDVQENPVWGTVNFDLGKREVRNFLISNALFWMRYFHIDGFRVDAVANMLYWNKEGQEQSNEHAVSFLRELNEAVFAEDEDFLMTAEDSTAWPLVTAPTYEGGLGFNYKWNMGWMNDVLKYMECAPEYRKYIHDKMTFSLLYAYSENFILPLSHDEVVHGKKSLLNKMPGDYWDKFAQLRLLYGYFFTHPGKKLLFMGGEFGQFDEWKDLEDLDWNLHDFEMHRYMHDYFKELIALYKRSKPLWQLDHSPEGFQWIDANNNEQSIFSFIRQGDKQEDALVVVCNFTKATYENYKVGVPDFEYYNEILNSDAEQYGGSGQVNKKRLKAIQEPYHNQAAHVEITIPPFGVSILRPVKTRKGSKKQDGSKTKVRSNVTSRGKR.

The active-site Nucleophile is the aspartate 309. Glutamate 352 acts as the Proton donor in catalysis. The interval 619 to 645 is disordered; the sequence is VKTRKGSKKQDGSKTKVRSNVTSRGKR. The span at 636–645 shows a compositional bias: polar residues; it reads RSNVTSRGKR.

This sequence belongs to the glycosyl hydrolase 13 family. GlgB subfamily. In terms of assembly, monomer.

The catalysed reaction is Transfers a segment of a (1-&gt;4)-alpha-D-glucan chain to a primary hydroxy group in a similar glucan chain.. The protein operates within glycan biosynthesis; glycogen biosynthesis. In terms of biological role, catalyzes the formation of the alpha-1,6-glucosidic linkages in glycogen by scission of a 1,4-alpha-linked oligosaccharide from growing alpha-1,4-glucan chains and the subsequent attachment of the oligosaccharide to the alpha-1,6 position. The sequence is that of 1,4-alpha-glucan branching enzyme GlgB from Bacillus cereus (strain Q1).